The chain runs to 355 residues: UPF0421 protein BCE33L2478 (355 aa).

The next 4 membrane-spanning stretches (helical) occupy residues 19 to 39 (IAVFLTVLVCEFFNIPTIFAV), 74 to 94 (FTFFLGHQALSYALAAMFTIV), 109 to 129 (TLTAVAMIPITADHYFTAFLI), and 131 to 151 (LATTSTGIIVSTVVNFFILPP).

The protein belongs to the UPF0421 family.

The protein localises to the cell membrane. This is UPF0421 protein BCE33L2478 from Bacillus cereus (strain ZK / E33L).